The primary structure comprises 279 residues: Energy-coupling factor transporter ATP-binding protein EcfA1 (279 aa).

Residues 5–240 (IELKKVTFNY…GDELLQLGLD (236 aa)) form the ABC transporter domain. Position 40–47 (40–47 (GHNGSGKS)) interacts with ATP.

This sequence belongs to the ABC transporter superfamily. Energy-coupling factor EcfA family. In terms of assembly, forms a stable energy-coupling factor (ECF) transporter complex composed of 2 membrane-embedded substrate-binding proteins (S component), 2 ATP-binding proteins (A component) and 2 transmembrane proteins (T component).

It is found in the cell membrane. ATP-binding (A) component of a common energy-coupling factor (ECF) ABC-transporter complex. Unlike classic ABC transporters this ECF transporter provides the energy necessary to transport a number of different substrates. This is Energy-coupling factor transporter ATP-binding protein EcfA1 from Streptococcus pyogenes serotype M5 (strain Manfredo).